The sequence spans 344 residues: N-acetyl-gamma-glutamyl-phosphate reductase (344 aa).

Residue Cys147 is part of the active site.

It belongs to the NAGSA dehydrogenase family. Type 1 subfamily.

It is found in the cytoplasm. It catalyses the reaction N-acetyl-L-glutamate 5-semialdehyde + phosphate + NADP(+) = N-acetyl-L-glutamyl 5-phosphate + NADPH + H(+). It participates in amino-acid biosynthesis; L-arginine biosynthesis; N(2)-acetyl-L-ornithine from L-glutamate: step 3/4. Functionally, catalyzes the NADPH-dependent reduction of N-acetyl-5-glutamyl phosphate to yield N-acetyl-L-glutamate 5-semialdehyde. This is N-acetyl-gamma-glutamyl-phosphate reductase from Bacillus amyloliquefaciens (Bacillus velezensis).